The sequence spans 417 residues: Gamma-glutamyl phosphate reductase (417 aa).

Belongs to the gamma-glutamyl phosphate reductase family.

Its subcellular location is the cytoplasm. The catalysed reaction is L-glutamate 5-semialdehyde + phosphate + NADP(+) = L-glutamyl 5-phosphate + NADPH + H(+). The protein operates within amino-acid biosynthesis; L-proline biosynthesis; L-glutamate 5-semialdehyde from L-glutamate: step 2/2. Functionally, catalyzes the NADPH-dependent reduction of L-glutamate 5-phosphate into L-glutamate 5-semialdehyde and phosphate. The product spontaneously undergoes cyclization to form 1-pyrroline-5-carboxylate. This chain is Gamma-glutamyl phosphate reductase, found in Heliobacterium modesticaldum (strain ATCC 51547 / Ice1).